The following is a 556-amino-acid chain: Arginine--tRNA ligase (556 aa).

Residues 132 to 142 (ANPTGSLHLGH) carry the 'HIGH' region motif.

This sequence belongs to the class-I aminoacyl-tRNA synthetase family. As to quaternary structure, monomer.

Its subcellular location is the cytoplasm. It catalyses the reaction tRNA(Arg) + L-arginine + ATP = L-arginyl-tRNA(Arg) + AMP + diphosphate. This is Arginine--tRNA ligase from Anoxybacillus flavithermus (strain DSM 21510 / WK1).